Here is a 181-residue protein sequence, read N- to C-terminus: Transmembrane protein 47 (181 aa).

Alanine 2 is modified (N-acetylalanine). A run of 4 helical transmembrane segments spans residues 21 to 41, 83 to 103, 115 to 135, and 152 to 172; these read LVGLVCIFLALCLDLGAVLSP, ALLLGGAAIILIAFLVGLISI, VAVMLFAAVVLQVCSLVLYPI, and GYGLAWGATIFSFGGAILYCL.

The protein belongs to the TMEM47 family. As to quaternary structure, interacts with CTNNB1, CTNNA1, PRKCI, PARD6B. Interacts with FYB1. As to expression, expressed in podocytes (at protein level).

The protein resides in the membrane. Its subcellular location is the cell junction. The protein localises to the adherens junction. In terms of biological role, regulates cell junction organization in epithelial cells. May play a role in the transition from adherens junction to tight junction assembly. May regulate F-actin polymerization required for tight junctional localization dynamics and affect the junctional localization of PARD6B. During podocyte differentiation may negatively regulate activity of FYN and subsequently the abundance of nephrin. This chain is Transmembrane protein 47 (Tmem47), found in Mus musculus (Mouse).